The primary structure comprises 194 residues: Surfactant protein C (194 aa).

Residues 1-21 (MDMGSKEVLMESPPDYSTGPR) are disordered. Positions 1-23 (MDMGSKEVLMESPPDYSTGPRSQ) are excised as a propeptide. 2 S-palmitoyl cysteine lipidation sites follow: Cys28 and Cys29. A propeptide spanning residues 59–194 (HMSQKHTEMV…LCGELPLYYI (136 aa)) is cleaved from the precursor. The 100-residue stretch at 95 to 194 (FSIGSTGIVL…LCGELPLYYI (100 aa)) folds into the BRICHOS domain. Cys122 and Cys186 are oxidised to a cystine. The tract at residues 149-170 (SSTPTSKLGQEEGHSAGSDSDS) is disordered.

It localises to the secreted. Its subcellular location is the extracellular space. The protein resides in the surface film. Pulmonary surfactant associated proteins promote alveolar stability by lowering the surface tension at the air-liquid interface in the peripheral air spaces. In Rattus norvegicus (Rat), this protein is Surfactant protein C.